The sequence spans 139 residues: Putative pre-16S rRNA nuclease (139 aa).

It belongs to the YqgF nuclease family.

It is found in the cytoplasm. Could be a nuclease involved in processing of the 5'-end of pre-16S rRNA. The protein is Putative pre-16S rRNA nuclease of Dictyoglomus thermophilum (strain ATCC 35947 / DSM 3960 / H-6-12).